A 380-amino-acid polypeptide reads, in one-letter code: Sterol 24-C-methyltransferase ERG6B (380 aa).

This sequence belongs to the class I-like SAM-binding methyltransferase superfamily. Erg6/SMT family.

The catalysed reaction is lanosterol + S-adenosyl-L-methionine = eburicol + S-adenosyl-L-homocysteine + H(+). The protein operates within steroid metabolism; ergosterol biosynthesis. In terms of biological role, sterol 24-C-methyltransferase; part of the third module of ergosterol biosynthesis pathway that includes the late steps of the pathway. ERG6A and ERG6B methylate lanosterol at C-24 to produce eburicol. The third module or late pathway involves the ergosterol synthesis itself through consecutive reactions that mainly occur in the endoplasmic reticulum (ER) membrane. Firstly, the squalene synthase ERG9 catalyzes the condensation of 2 farnesyl pyrophosphate moieties to form squalene, which is the precursor of all steroids. Squalene synthase is crucial for balancing the incorporation of farnesyl diphosphate (FPP) into sterol and nonsterol isoprene synthesis. Secondly, squalene is converted into lanosterol by the consecutive action of the squalene epoxidase ERG1 and the lanosterol synthase ERG7. Then, the delta(24)-sterol C-methyltransferase ERG6 methylates lanosterol at C-24 to produce eburicol. Eburicol is the substrate of the sterol 14-alpha demethylase encoded by CYP51A, CYP51B and CYP51C, to yield 4,4,24-trimethyl ergosta-8,14,24(28)-trienol. CYP51B encodes the enzyme primarily responsible for sterol 14-alpha-demethylation, and plays an essential role in ascospore formation. CYP51A encodes an additional sterol 14-alpha-demethylase, induced on ergosterol depletion and responsible for the intrinsic variation in azole sensitivity. The third CYP51 isoform, CYP51C, does not encode a sterol 14-alpha-demethylase, but is required for full virulence on host wheat ears. The C-14 reductase ERG24 then reduces the C14=C15 double bond which leads to 4,4-dimethylfecosterol. A sequence of further demethylations at C-4, involving the C-4 demethylation complex containing the C-4 methylsterol oxidases ERG25, the sterol-4-alpha-carboxylate 3-dehydrogenase ERG26 and the 3-keto-steroid reductase ERG27, leads to the production of fecosterol via 4-methylfecosterol. ERG28 has a role as a scaffold to help anchor ERG25, ERG26 and ERG27 to the endoplasmic reticulum. The C-8 sterol isomerase ERG2 then catalyzes the reaction which results in unsaturation at C-7 in the B ring of sterols and thus converts fecosterol to episterol. The sterol-C5-desaturases ERG3A and ERG3BB then catalyze the introduction of a C-5 double bond in the B ring to produce 5-dehydroepisterol. The C-22 sterol desaturases ERG5A and ERG5B further convert 5-dehydroepisterol into ergosta-5,7,22,24(28)-tetraen-3beta-ol by forming the C-22(23) double bond in the sterol side chain. Finally, ergosta-5,7,22,24(28)-tetraen-3beta-ol is substrate of the C-24(28) sterol reductase ERG4 to produce ergosterol. The chain is Sterol 24-C-methyltransferase ERG6B from Gibberella zeae (strain ATCC MYA-4620 / CBS 123657 / FGSC 9075 / NRRL 31084 / PH-1) (Wheat head blight fungus).